The sequence spans 285 residues: MALERLFRRKRPSGGNRDVPELWTKCEACGAQIYKKEFQENLHVCPKCGHHHRLPAQERVAMLADPGTFQETTRLRPLDPLGFVDTKPYVERLKAYQAETGRPDAILGGTCQIGGVPAVLLVMDYAFAGGSMGSVVGEEIARGAERAAEEGRALVIVAASGGARMQEAALSLMQMAKTVMSLDRVWARRLPYVSVLTDPTTGGVTASFAALADVILAEPGALIGFAGPRVIRQTIRQELPEGFQRSEFLLKHGMVDRVTDRRRLKEELVRVLRHLHPGVAYAPGV.

Residues 22–285 enclose the CoA carboxyltransferase N-terminal domain; that stretch reads LWTKCEACGA…HPGVAYAPGV (264 aa). Cysteine 26, cysteine 29, cysteine 45, and cysteine 48 together coordinate Zn(2+). Residues 26 to 48 form a C4-type zinc finger; sequence CEACGAQIYKKEFQENLHVCPKC.

It belongs to the AccD/PCCB family. As to quaternary structure, acetyl-CoA carboxylase is a heterohexamer composed of biotin carboxyl carrier protein (AccB), biotin carboxylase (AccC) and two subunits each of ACCase subunit alpha (AccA) and ACCase subunit beta (AccD). The cofactor is Zn(2+).

The protein resides in the cytoplasm. It catalyses the reaction N(6)-carboxybiotinyl-L-lysyl-[protein] + acetyl-CoA = N(6)-biotinyl-L-lysyl-[protein] + malonyl-CoA. It functions in the pathway lipid metabolism; malonyl-CoA biosynthesis; malonyl-CoA from acetyl-CoA: step 1/1. Functionally, component of the acetyl coenzyme A carboxylase (ACC) complex. Biotin carboxylase (BC) catalyzes the carboxylation of biotin on its carrier protein (BCCP) and then the CO(2) group is transferred by the transcarboxylase to acetyl-CoA to form malonyl-CoA. The polypeptide is Acetyl-coenzyme A carboxylase carboxyl transferase subunit beta (Thermus thermophilus (strain ATCC BAA-163 / DSM 7039 / HB27)).